We begin with the raw amino-acid sequence, 378 residues long: Putative UDP-N-acetylglucosamine 2-epimerase (378 aa).

Belongs to the UDP-N-acetylglucosamine 2-epimerase family.

Its subcellular location is the cytoplasm. It catalyses the reaction UDP-N-acetyl-alpha-D-glucosamine = UDP-N-acetyl-alpha-D-mannosamine. This is Putative UDP-N-acetylglucosamine 2-epimerase from Thermotoga maritima (strain ATCC 43589 / DSM 3109 / JCM 10099 / NBRC 100826 / MSB8).